Consider the following 491-residue polypeptide: 3-phosphoinositide-dependent protein kinase 1 (491 aa).

Residues 44–311 (FEFGKIYGVG…YVALKRHPFF (268 aa)) form the Protein kinase domain. ATP contacts are provided by residues 54–56 (SYS) and Lys-73. The interval 75–119 (MDKKFITKENKTAYVKLERIVLDQLEHPGIIKLYFTFQDTSSLYM) is PIF-pocket. Residues 77–112 (KKFITKENKTAYVKLERIVLDQLEHPGIIKLYFTFQ) are PIF-binding. ATP contacts are provided by residues 122–124 (ESC) and Glu-128. The active-site Proton acceptor is Asp-167. Glu-171 is an ATP binding site. Ser-177 carries the phosphoserine modification. Position 185 (Asp-185) interacts with ATP. An activation loop region spans residues 185 to 222 (DFGSVKPMQDSQITVLPNAASDDKACTFVGTAAYVPPE). Phosphothreonine; by autocatalysis is present on Thr-211. Phosphoserine is present on residues Ser-276 and Ser-337. The segment at 321-377 (SQTPPKLAPDPASQTASPERDDTHGSPWNLTHIGDSLATQNEGHSAPPTSSESSGSI) is disordered. The span at 365–376 (SAPPTSSESSGS) shows a compositional bias: low complexity. Ser-382 carries the phosphoserine modification. One can recognise a PH domain in the interval 386–491 (FDSRWQQFLE…KKAIETLQNR (106 aa)).

It belongs to the protein kinase superfamily. AGC Ser/Thr protein kinase family. PDPK1 subfamily. As to quaternary structure, interacts with AGC1-5 and AGC1-7. Interacts with the C-terminal PIF domain of the protein kinases D6PK/AGC1-1, OXI1/AGC2-1 and PID. In terms of processing, phosphorylation on Thr-211 in the activation loop is required for full activity. PDK1 itself can autophosphorylate Thr-211, leading to its own activation. Ubiquitous.

It is found in the cytoplasm. The protein localises to the membrane. It carries out the reaction L-seryl-[protein] + ATP = O-phospho-L-seryl-[protein] + ADP + H(+). The enzyme catalyses L-threonyl-[protein] + ATP = O-phospho-L-threonyl-[protein] + ADP + H(+). Activated by phosphatidic acid (PA) and in response to the fungal elicitor xylanase. In terms of biological role, may couple lipid signals to the activation-loop phosphorylation of several protein kinases of the so-called AGC kinase family. Interacts via its pleckstrin homology domain with phosphatidic acid, PtdIns3P and PtdIns(3,4)P2 and to a lesser extent with PtdIns(4,5)P2 and PtdIns4P. May play a general role in signaling processes controlling the pathogen/stress response, polar auxin transport and development. Transphosphorylates the AGC protein kinases OXI1/AGC2-1, PK1/S6K1, PK19/S6K2 and PID resulting in their activation. In Arabidopsis thaliana (Mouse-ear cress), this protein is 3-phosphoinositide-dependent protein kinase 1 (PDPK1).